The primary structure comprises 548 residues: Probable delta-1-pyrroline-5-carboxylate dehydrogenase (548 aa).

Glu298 functions as the Proton acceptor in the catalytic mechanism. The active-site Nucleophile is Cys332. Phosphoserine occurs at positions 391, 394, and 396.

This sequence belongs to the aldehyde dehydrogenase family.

The enzyme catalyses L-glutamate 5-semialdehyde + NAD(+) + H2O = L-glutamate + NADH + 2 H(+). It functions in the pathway amino-acid degradation; L-proline degradation into L-glutamate; L-glutamate from L-proline: step 2/2. This chain is Probable delta-1-pyrroline-5-carboxylate dehydrogenase, found in Schizosaccharomyces pombe (strain 972 / ATCC 24843) (Fission yeast).